The following is a 226-amino-acid chain: Ribose-5-phosphate isomerase A (226 aa).

Substrate is bound by residues 25–28, 81–84, and 94–97; these read TGST, DGAD, and KGGG. Residue Glu103 is the Proton acceptor of the active site. Lys121 lines the substrate pocket.

The protein belongs to the ribose 5-phosphate isomerase family. As to quaternary structure, homodimer.

The enzyme catalyses aldehydo-D-ribose 5-phosphate = D-ribulose 5-phosphate. It functions in the pathway carbohydrate degradation; pentose phosphate pathway; D-ribose 5-phosphate from D-ribulose 5-phosphate (non-oxidative stage): step 1/1. Functionally, catalyzes the reversible conversion of ribose-5-phosphate to ribulose 5-phosphate. This Enterococcus faecalis (strain ATCC 700802 / V583) protein is Ribose-5-phosphate isomerase A.